Consider the following 673-residue polypeptide: Probable multidrug resistance ABC transporter ATP-binding/permease protein YheH (673 aa).

Helical transmembrane passes span L18 to I38, I146 to F166, L223 to T243, L245 to L265, and L347 to V367. The ABC transmembrane type-1 domain occupies L18 to L398. Residues V430–L664 enclose the ABC transporter domain. G463 to S470 contacts ATP.

Belongs to the ABC transporter superfamily. As to quaternary structure, heterodimer composed of YheH and YheI.

It is found in the cell membrane. Inhibited by ortho-vanadate. Its function is as follows. Involved in the transport of four structurally unrelated drugs, including doxorubicin and mitoxantrone. Transmembrane domains (TMD) form a pore in the membrane and the ATP-binding domain (NBD) is responsible for energy generation. The sequence is that of Probable multidrug resistance ABC transporter ATP-binding/permease protein YheH (yheH) from Bacillus subtilis (strain 168).